The primary structure comprises 255 residues: Hydroxyacylglutathione hydrolase (255 aa).

Positions 55, 57, 59, 60, 113, 132, and 170 each coordinate Zn(2+).

The protein belongs to the metallo-beta-lactamase superfamily. Glyoxalase II family. As to quaternary structure, monomer. Zn(2+) is required as a cofactor.

It catalyses the reaction an S-(2-hydroxyacyl)glutathione + H2O = a 2-hydroxy carboxylate + glutathione + H(+). It participates in secondary metabolite metabolism; methylglyoxal degradation; (R)-lactate from methylglyoxal: step 2/2. In terms of biological role, thiolesterase that catalyzes the hydrolysis of S-D-lactoyl-glutathione to form glutathione and D-lactic acid. This Methylobacterium nodulans (strain LMG 21967 / CNCM I-2342 / ORS 2060) protein is Hydroxyacylglutathione hydrolase.